The sequence spans 479 residues: Serine carboxypeptidase-like 44 (479 aa).

The first 22 residues, 1 to 22 (MVGGKWRFLEVAVVVMVLQWSC), serve as a signal peptide directing secretion. Disulfide bonds link Cys92-Cys352, Cys253-Cys270, and Cys295-Cys320. N-linked (GlcNAc...) asparagine glycosylation is present at Asn143. The active site involves Ser184. N-linked (GlcNAc...) asparagine glycosylation is present at Asn265. Asn341 carries N-linked (GlcNAc...) asparagine glycosylation. Residue Asp389 is part of the active site. Asn411 is a glycosylation site (N-linked (GlcNAc...) asparagine). Residue His446 is part of the active site.

Belongs to the peptidase S10 family. Expressed in seedlings.

Its subcellular location is the secreted. Functionally, probable carboxypeptidase. This Arabidopsis thaliana (Mouse-ear cress) protein is Serine carboxypeptidase-like 44 (SCPL44).